Reading from the N-terminus, the 117-residue chain is Large ribosomal subunit protein uL18 (117 aa).

This sequence belongs to the universal ribosomal protein uL18 family. As to quaternary structure, part of the 50S ribosomal subunit; part of the 5S rRNA/L5/L18/L25 subcomplex. Contacts the 5S and 23S rRNAs.

Functionally, this is one of the proteins that bind and probably mediate the attachment of the 5S RNA into the large ribosomal subunit, where it forms part of the central protuberance. The chain is Large ribosomal subunit protein uL18 from Vibrio campbellii (strain ATCC BAA-1116).